We begin with the raw amino-acid sequence, 185 residues long: Ribosome-recycling factor (185 aa).

This sequence belongs to the RRF family.

It is found in the cytoplasm. Functionally, responsible for the release of ribosomes from messenger RNA at the termination of protein biosynthesis. May increase the efficiency of translation by recycling ribosomes from one round of translation to another. This is Ribosome-recycling factor from Roseiflexus sp. (strain RS-1).